We begin with the raw amino-acid sequence, 382 residues long: Acetylserotonin O-methyltransferase (382 aa).

The S-adenosyl-L-homocysteine site is built by G218, D241, D261, M262, and K275. H279 serves as the catalytic Proton acceptor. Catalysis depends on residues E308 and E347.

It belongs to the class I-like SAM-binding methyltransferase superfamily. Cation-independent O-methyltransferase family.

Its subcellular location is the cytoplasm. It carries out the reaction N-acetylserotonin + S-adenosyl-L-methionine = melatonin + S-adenosyl-L-homocysteine + H(+). The protein operates within aromatic compound metabolism; melatonin biosynthesis; melatonin from serotonin: step 1/2. Functionally, methyltransferase which catalyzes the transfer of a methyl group onto N-acetylserotonin, producing melatonin (N-acetyl-5-methoxytryptamine). Does not seem to possess caffeate O-methyltransferase activity. Implicated in melatonin-dependent circadian dynamics of stomatal aperture to minimize night water loss and promote drought tolerance. Prevents seed germination by promoting melatonin biosynthesis. Promotes melatonin-triggered defense responses to the necrotrophic fungus Botrytis cinerea. (Microbial infection) Promotes melatonin-triggered defense responses to the necrotrophic fungus Botrytis cinerea. This chain is Acetylserotonin O-methyltransferase, found in Arabidopsis thaliana (Mouse-ear cress).